The sequence spans 208 residues: Small ribosomal subunit protein uS4 (208 aa).

In terms of domain architecture, S4 RNA-binding spans 98–160 (RRIDNTVYRL…SRQLQMINEA (63 aa)).

The protein belongs to the universal ribosomal protein uS4 family. As to quaternary structure, part of the 30S ribosomal subunit. Contacts protein S5. The interaction surface between S4 and S5 is involved in control of translational fidelity.

In terms of biological role, one of the primary rRNA binding proteins, it binds directly to 16S rRNA where it nucleates assembly of the body of the 30S subunit. Its function is as follows. With S5 and S12 plays an important role in translational accuracy. In Syntrophobacter fumaroxidans (strain DSM 10017 / MPOB), this protein is Small ribosomal subunit protein uS4.